Here is a 252-residue protein sequence, read N- to C-terminus: MAARKPGLIALFDVDGTLTAPRKEVTPEMLKFMKELRKVVTVGVVGGSDLVKISEQLGKTVTTDYDYCFSENGLVAHKDGKLIGTQSLKSFLGDEKLKEFINFTLHYIADLDIPIKRGTFIEFRSGMLNVSPIGRDCSQEERDEFEKYDKVHKIRQTMVSVLREKFAHLNLTFSIGGQISFDVFPQGWDKTYCLRYLEEFNEIHFFGDKTYKGGNDHEIYESERTVGHTVTSPEDTVKQCSEQFLGKDNGSS.

Asp-13 functions as the Nucleophile in the catalytic mechanism. Mg(2+) contacts are provided by Asp-13 and Asp-15. Asp-15 acts as the Proton donor/acceptor in catalysis. Alpha-D-mannose 1-phosphate-binding residues include Arg-22, Arg-124, Arg-135, Arg-142, Ser-180, and Asp-182. The Mg(2+) site is built by Asp-208, Tyr-220, and Thr-225.

It belongs to the eukaryotic PMM family. As to quaternary structure, homodimer. Mg(2+) is required as a cofactor. As to expression, expressed in roots, stems, leaves, flowers and immature fruits.

The protein localises to the cytoplasm. It carries out the reaction alpha-D-mannose 1-phosphate = D-mannose 6-phosphate. The protein operates within nucleotide-sugar biosynthesis; GDP-alpha-D-mannose biosynthesis; alpha-D-mannose 1-phosphate from D-fructose 6-phosphate: step 2/2. Its function is as follows. Catalyzes the interconversion of mannose-6-phosphate to mannose-1-phosphate, the precursor for the synthesis of GDP-mannose. GDP-mannose is an essential sugar nucleotide for the synthesis of D-mannose-containing cell wall polysaccharides (galactomannans and glucomannans), glycolipids, glycoproteins and the antioxidant L-ascorbate. Can complement the yeast temperature-sensitive mutant sec53-6. This Nicotiana benthamiana protein is Phosphomannomutase.